We begin with the raw amino-acid sequence, 512 residues long: Extracellular serine/threonine protein kinase CeFam20 (512 aa).

The Cytoplasmic portion of the chain corresponds to 1–6 (MRCNIK). A helical; Signal-anchor for type II membrane protein transmembrane segment spans residues 7–26 (RLFTLAIGVFAATLVIISFS). Over 27-512 (KDNYEREWKQ…QDKKDDKKTV (486 aa)) the chain is Lumenal. Residues cysteine 110 and cysteine 144 are joined by a disulfide bond. N-linked (GlcNAc...) asparagine glycosylation is present at asparagine 113. Positions 176, 192, and 213 each coordinate ATP. Position 213 (glutamate 213) interacts with Mn(2+). An N-linked (GlcNAc...) asparagine glycan is attached at asparagine 242. Intrachain disulfides connect cysteine 268-cysteine 284 and cysteine 273-cysteine 277. Residue 295-298 (QVFL) participates in ATP binding. Intrachain disulfides connect cysteine 333–cysteine 409 and cysteine 410–cysteine 469. Aspartate 366 is a catalytic residue. Residues glutamate 371 and aspartate 387 each coordinate ATP. Residue aspartate 387 coordinates Mn(2+). Residues 486-512 (PDVSDAEQNDEEQSEEHQDKKDDKKTV) are disordered. The segment covering 489-499 (SDAEQNDEEQS) has biased composition (acidic residues). Over residues 500 to 512 (EEHQDKKDDKKTV) the composition is skewed to basic and acidic residues.

This sequence belongs to the FAM20 family. Requires Mn(2+) as cofactor.

The protein resides in the golgi apparatus membrane. The protein localises to the secreted. It carries out the reaction L-seryl-[protein] + ATP = O-phospho-L-seryl-[protein] + ADP + H(+). It catalyses the reaction L-threonyl-[protein] + ATP = O-phospho-L-threonyl-[protein] + ADP + H(+). Its function is as follows. Golgi serine/threonine protein kinase that phosphorylates secretory pathway proteins within Ser-x-Glu/pSer motifs. The sequence is that of Extracellular serine/threonine protein kinase CeFam20 from Caenorhabditis elegans.